The chain runs to 396 residues: Ribosomal RNA large subunit methyltransferase I (396 aa).

One can recognise a PUA domain in the interval 2–81 (TVRLILAKGR…ESIDIDFFVR (80 aa)).

The protein belongs to the methyltransferase superfamily. RlmI family.

It localises to the cytoplasm. The catalysed reaction is cytidine(1962) in 23S rRNA + S-adenosyl-L-methionine = 5-methylcytidine(1962) in 23S rRNA + S-adenosyl-L-homocysteine + H(+). Its function is as follows. Specifically methylates the cytosine at position 1962 (m5C1962) of 23S rRNA. In Erwinia tasmaniensis (strain DSM 17950 / CFBP 7177 / CIP 109463 / NCPPB 4357 / Et1/99), this protein is Ribosomal RNA large subunit methyltransferase I.